Consider the following 467-residue polypeptide: 3-isopropylmalate dehydratase large subunit (467 aa).

[4Fe-4S] cluster-binding residues include C349, C409, and C412. The segment at P422–R443 is disordered.

This sequence belongs to the aconitase/IPM isomerase family. LeuC type 1 subfamily. Heterodimer of LeuC and LeuD. It depends on [4Fe-4S] cluster as a cofactor.

The enzyme catalyses (2R,3S)-3-isopropylmalate = (2S)-2-isopropylmalate. The protein operates within amino-acid biosynthesis; L-leucine biosynthesis; L-leucine from 3-methyl-2-oxobutanoate: step 2/4. Its function is as follows. Catalyzes the isomerization between 2-isopropylmalate and 3-isopropylmalate, via the formation of 2-isopropylmaleate. The polypeptide is 3-isopropylmalate dehydratase large subunit (Paramagnetospirillum magneticum (strain ATCC 700264 / AMB-1) (Magnetospirillum magneticum)).